Reading from the N-terminus, the 444-residue chain is Multidrug resistance protein MdtA (444 aa).

The N-terminal stretch at 1–20 (MKSQSKRTSRLFVFVGVVVA) is a signal peptide. The span at 37–52 (NNTSGAQQSARGQDTS) shows a compositional bias: polar residues. Disordered regions lie at residues 37-60 (NNTS…RNTP) and 398-444 (TPRS…AEKS). The segment covering 409 to 419 (ASAEKAAAEAE) has biased composition (low complexity). Residues 435 to 444 (ARSTTAAEKS) are compositionally biased toward polar residues.

Belongs to the membrane fusion protein (MFP) (TC 8.A.1) family. As to quaternary structure, part of a tripartite efflux system composed of MdtA, MdtB and MdtC.

The protein resides in the cell inner membrane. This chain is Multidrug resistance protein MdtA, found in Yersinia pseudotuberculosis serotype O:3 (strain YPIII).